The sequence spans 533 residues: Bifunctional purine biosynthesis protein PurH (533 aa).

The region spanning 1 to 148 (MDTPRPIKRA…KNHKDVTIVV (148 aa)) is the MGS-like domain.

Belongs to the PurH family.

The enzyme catalyses (6R)-10-formyltetrahydrofolate + 5-amino-1-(5-phospho-beta-D-ribosyl)imidazole-4-carboxamide = 5-formamido-1-(5-phospho-D-ribosyl)imidazole-4-carboxamide + (6S)-5,6,7,8-tetrahydrofolate. The catalysed reaction is IMP + H2O = 5-formamido-1-(5-phospho-D-ribosyl)imidazole-4-carboxamide. The protein operates within purine metabolism; IMP biosynthesis via de novo pathway; 5-formamido-1-(5-phospho-D-ribosyl)imidazole-4-carboxamide from 5-amino-1-(5-phospho-D-ribosyl)imidazole-4-carboxamide (10-formyl THF route): step 1/1. Its pathway is purine metabolism; IMP biosynthesis via de novo pathway; IMP from 5-formamido-1-(5-phospho-D-ribosyl)imidazole-4-carboxamide: step 1/1. This Colwellia psychrerythraea (strain 34H / ATCC BAA-681) (Vibrio psychroerythus) protein is Bifunctional purine biosynthesis protein PurH.